The following is a 160-amino-acid chain: MQADPQENQVRTTVDIARIIDMIPHRYPFLMVDKLIDMVRGESAIGIKNVTINEPFFQGHFPNRPVMPGVLIVEAMAQTAAVLVVETLGVRAEGKIVYFMIVENARFRKPVIPGDQLRLHVAKERHRGNVWKFRGVAKVDEVVVAEATFAAMIMDEEPQP.

Histidine 60 is an active-site residue.

This sequence belongs to the thioester dehydratase family. FabZ subfamily.

It localises to the cytoplasm. The catalysed reaction is a (3R)-hydroxyacyl-[ACP] = a (2E)-enoyl-[ACP] + H2O. Its function is as follows. Involved in unsaturated fatty acids biosynthesis. Catalyzes the dehydration of short chain beta-hydroxyacyl-ACPs and long chain saturated and unsaturated beta-hydroxyacyl-ACPs. The sequence is that of 3-hydroxyacyl-[acyl-carrier-protein] dehydratase FabZ from Rhodospirillum rubrum (strain ATCC 11170 / ATH 1.1.1 / DSM 467 / LMG 4362 / NCIMB 8255 / S1).